The sequence spans 843 residues: Protein P (843 aa).

Residues 1–177 (MPLSYQHFRK…FCGSPYSWEQ (177 aa)) are terminal protein domain (TP). The spacer stretch occupies residues 178–346 (ELQHGRLVFQ…YCLSHIVNLL (169 aa)). A polymerase/reverse transcriptase domain (RT) region spans residues 347 to 690 (EDWGPCTEHG…YMNLYPVARQ (344 aa)). The 244-residue stretch at 357–600 (EHHIRIPRTP…YSLNFMGYVI (244 aa)) folds into the Reverse transcriptase domain. Mg(2+)-binding residues include Asp-429, Asp-551, and Asp-552.

It belongs to the hepadnaviridae P protein family.

The enzyme catalyses DNA(n) + a 2'-deoxyribonucleoside 5'-triphosphate = DNA(n+1) + diphosphate. The catalysed reaction is Endonucleolytic cleavage to 5'-phosphomonoester.. Activated by host HSP70 and HSP40 in vitro to be able to bind the epsilon loop of the pgRNA. Because deletion of the RNase H region renders the protein partly chaperone-independent, the chaperones may be needed indirectly to relieve occlusion of the RNA-binding site by this domain. Inhibited by several reverse-transcriptase inhibitors: Lamivudine, Adefovir and Entecavir. Functionally, multifunctional enzyme that converts the viral RNA genome into dsDNA in viral cytoplasmic capsids. This enzyme displays a DNA polymerase activity that can copy either DNA or RNA templates, and a ribonuclease H (RNase H) activity that cleaves the RNA strand of RNA-DNA heteroduplexes in a partially processive 3'- to 5'-endonucleasic mode. Neo-synthesized pregenomic RNA (pgRNA) are encapsidated together with the P protein, and reverse-transcribed inside the nucleocapsid. Initiation of reverse-transcription occurs first by binding the epsilon loop on the pgRNA genome, and is initiated by protein priming, thereby the 5'-end of (-)DNA is covalently linked to P protein. Partial (+)DNA is synthesized from the (-)DNA template and generates the relaxed circular DNA (RC-DNA) genome. After budding and infection, the RC-DNA migrates in the nucleus, and is converted into a plasmid-like covalently closed circular DNA (cccDNA). The activity of P protein does not seem to be necessary for cccDNA generation, and is presumably released from (+)DNA by host nuclear DNA repair machinery. The polypeptide is Protein P (Homo sapiens (Human)).